Consider the following 94-residue polypeptide: Small ribosomal subunit protein uS17 (94 aa).

It belongs to the universal ribosomal protein uS17 family. As to quaternary structure, part of the 30S ribosomal subunit.

One of the primary rRNA binding proteins, it binds specifically to the 5'-end of 16S ribosomal RNA. The chain is Small ribosomal subunit protein uS17 from Deinococcus geothermalis (strain DSM 11300 / CIP 105573 / AG-3a).